The primary structure comprises 422 residues: Secernin-3 (422 aa).

Residues 1-5 constitute a propeptide that is removed on maturation; sequence MEPCS. Cysteine 6 is a catalytic residue. Cysteine 6 bears the Glyoxylic acid (Cys); alternate mark. Cysteine 6 carries the post-translational modification Pyruvic acid (Cys); alternate.

It belongs to the peptidase C69 family. Secernin subfamily.

Its function is as follows. Plays a role in thermal nociception. The chain is Secernin-3 (SCRN3) from Bos taurus (Bovine).